The chain runs to 203 residues: Transmembrane protein 269 (203 aa).

3 helical membrane passes run 60–80, 124–144, and 157–177; these read GLASALLLGVDGLLSGILAII, FILCCMASLMILFMMDQSYYP, and LVYIGGVIMLFFSPLSLSAFY.

Its subcellular location is the membrane. The sequence is that of Transmembrane protein 269 from Homo sapiens (Human).